We begin with the raw amino-acid sequence, 577 residues long: Arginine--tRNA ligase (577 aa).

Residues 132–142 (ANPTGPLHVGH) carry the 'HIGH' region motif.

The protein belongs to the class-I aminoacyl-tRNA synthetase family. As to quaternary structure, monomer.

The protein resides in the cytoplasm. It carries out the reaction tRNA(Arg) + L-arginine + ATP = L-arginyl-tRNA(Arg) + AMP + diphosphate. This Janthinobacterium sp. (strain Marseille) (Minibacterium massiliensis) protein is Arginine--tRNA ligase.